The primary structure comprises 328 residues: DNA repair and recombination protein RadA (328 aa).

118-125 (GEYGSGKT) contributes to the ATP binding site.

This sequence belongs to the eukaryotic RecA-like protein family.

Its function is as follows. Involved in DNA repair and in homologous recombination. Binds and assemble on single-stranded DNA to form a nucleoprotein filament. Hydrolyzes ATP in a ssDNA-dependent manner and promotes DNA strand exchange between homologous DNA molecules. The chain is DNA repair and recombination protein RadA from Desulfurococcus amylolyticus (strain DSM 18924 / JCM 16383 / VKM B-2413 / 1221n) (Desulfurococcus kamchatkensis).